We begin with the raw amino-acid sequence, 346 residues long: Cytochrome c551 peroxidase (346 aa).

Residues 1 to 23 form the signal peptide; sequence MQSSQLLPLGSLLLSFATPLAQA. Heme c is bound by residues cysteine 74, cysteine 77, histidine 78, cysteine 220, cysteine 223, histidine 224, histidine 284, and methionine 298.

Heme c is required as a cofactor. Binds 2 heme groups per subunit. Sequencing of the whole protein indicates about 20% starts on Val-247.

The protein resides in the periplasm. The enzyme catalyses 2 Fe(II)-[cytochrome c] + H2O2 + 2 H(+) = 2 Fe(III)-[cytochrome c] + 2 H2O. In terms of biological role, catalyzes the peroxidative oxidation of azurin and cytochrome c551. Likely to provide protection against toxic peroxides. The chain is Cytochrome c551 peroxidase (ccpA) from Pseudomonas aeruginosa (strain ATCC 15692 / DSM 22644 / CIP 104116 / JCM 14847 / LMG 12228 / 1C / PRS 101 / PAO1).